Reading from the N-terminus, the 341-residue chain is Major histocompatibility complex class I-related protein 1 (341 aa).

The signal sequence occupies residues 1–18 (MMLLLPLLAVFLVKRSHT). Residues 19-105 (RTHSLRYFRL…RHLQRHYNHS (87 aa)) form an alpha-1 region. The antigen-binding cleft stretch occupies residues 19–197 (RTHSLRYFRL…EYGRDTLERT (179 aa)). Over 19–296 (RTHSLRYFRL…APRESGDILR (278 aa)) the chain is Extracellular. 8-(9H-purin-6-yl)-2-oxa-8-azabicyclo[3.3.1]nona-3,6-diene-4,6-dicarbaldehyde-binding residues include Y25 and R27. 5-(2-oxoethylideneamino)-6-(D-ribitylamino)uracil-binding residues include R27, S42, and K61. The 5-(2-oxopropylideneamino)-6-(D-ribitylamino)uracil site is built by R27, S42, and K61. Positions 27, 42, and 61 each coordinate 7-hydroxy-6-methyl-8-(1-D-ribityl)lumazine. 8-(9H-purin-6-yl)-2-oxa-8-azabicyclo[3.3.1]nona-3,6-diene-4,6-dicarbaldehyde contacts are provided by K61 and H76. Position 61 (K61) interacts with 2-amino-4-oxopteridine-6-carbaldehyde. K61 is a pyridoxal binding site. N-linked (GlcNAc...) asparagine glycosylation occurs at N103. An alpha-2 region spans residues 106–197 (GLHTYQRMIG…EYGRDTLERT (92 aa)). Position 112 (R112) interacts with 8-(9H-purin-6-yl)-2-oxa-8-azabicyclo[3.3.1]nona-3,6-diene-4,6-dicarbaldehyde. The 5-(2-oxoethylideneamino)-6-(D-ribitylamino)uracil site is built by R112, Y170, and Q171. 3 residues coordinate 5-(2-oxopropylideneamino)-6-(D-ribitylamino)uracil: R112, Y170, and Q171. 3 residues coordinate 7-hydroxy-6-methyl-8-(1-D-ribityl)lumazine: R112, Y170, and Q171. Disulfide bonds link C116–C179 and C218–C274. Positions 198–289 (EHPVVRTTRK…GRQMVLEAPR (92 aa)) are alpha-3. Residues 200-301 (PVVRTTRKET…GDILRVSTIS (102 aa)) form the Ig-like C1-type domain. The tract at residues 290-296 (ESGDILR) is connecting peptide. Residues 297-317 (VSTISGTTILIIALAGVGVLI) traverse the membrane as a helical segment. At 318-341 (WRRSQELKEVMYQPTQVNEGSSPS) the chain is on the cytoplasmic side.

This sequence belongs to the MHC class I family. Heterotrimer that consists of MR1, B2M and metabolite antigen. Major classes of metabolite ligands presented by MR1 include riboflavin-related antigens, pyrimidines and ribityl lumazines, nucleobase adducts and folate derivatives. Forms reversible covalent Schiff base complexes with microbial pyrimidine-based metabolite, which serves as a molecular switch triggering complete folding, stable association with B2M and translocation of the ternary complex from endoplasmic reticulum to the plasma membrane. Alternatively, forms non-Schiff base complexes with ribityl lumazines. On antigen-presenting cells, the ternary complex interacts with TCR on MR1-restricted CD4- or CD8-positive T cell subsets. Interacts with TAPBP and TAPBPL chaperones in the endoplasmic reticulum. TAPBP associated or not with MHC class I peptide loading complex binds ligand-free MR1 or MR1-B2M complex, providing for stable MR1 pools ready for metabolite antigen processing. TAPBPL interacts with MR1 in a ligand-independent way; this interaction may stabilize MR1 pool and facilitate ligand loading and dissociation. Structurally, MR1-B2M heterodimer adopts a topology similar to classical MHC class I molecules, with alpha-1 and alpha-2 domains of MR1 forming the antigen-binding cleft composed of two alpha-helices resting on a floor of 7-stranded anti-parallel beta-pleated sheet. N-glycosylated. As to expression, highly expressed thymus. Expressed in liver, kidney, spleen, heart, brain, lung, skeletal muscle and testis.

The protein localises to the cell membrane. It localises to the endoplasmic reticulum membrane. The protein resides in the golgi apparatus membrane. Its subcellular location is the early endosome membrane. It is found in the late endosome membrane. Functionally, antigen-presenting molecule specialized in displaying microbial pyrimidine-based metabolites to alpha-beta T cell receptors (TCR) on innate-type mucosal-associated invariant T (MAIT) cells. In complex with B2M preferentially presents riboflavin-derived metabolites to semi-invariant TRAV1 TCRs on MAIT cells, guiding immune surveillance of the microbial metabolome at mucosal epithelial barriers. Signature pyrimidine-based microbial antigens are generated via non-enzymatic condensation of metabolite intermediates of the riboflavin pathway with by-products arising from other metabolic pathways such as glycolysis. Typical potent antigenic metabolites are 5-(2-oxoethylideneamino)-6-D-ribitylaminouracil (5-OE-RU) and 5-(2-oxopropylideneamino)-6-D-ribitylaminouracil (5-OP-RU), products of condensation of 5-amino-6-D-ribityaminouracil (5-A-RU) with glyoxal or methylglyoxal by-products, respectively. May present microbial antigens to various TRAV1-negative MAIT cell subsets, providing for unique recognition of diverse microbes, including pathogens that do not synthesize riboflavin. Upon antigen recognition, elicits rapid innate-type MAIT cell activation to eliminate pathogenic microbes by directly killing infected cells. During T cell development, drives thymic selection and post-thymic terminal differentiation of MAIT cells in a process dependent on commensal microflora. Acts as an immune sensor of cancer cell metabolome. May present a tumor-specific or -associated metabolite essential for cancer cell survival to a pan-cancer TCR on a non-MAIT CD8-positive T cell clone, triggering T cell-mediated killing of a wide range of cancer cell types. May present tumor-enriched pyridoxal and pyridoxal 5'-phosphate antigens, enabling preferential recognition of cancer cells. Presents nucleobase carbonyl adducts generated during oxidative stress. Captures M3Ade, a nucleobase adduct composed of one adenine modified by a malondialdehyde trimer, for recognition by MR1-restricted T cell clones expressing a polyclonal TCR repertoire. The chain is Major histocompatibility complex class I-related protein 1 from Mus musculus (Mouse).